A 188-amino-acid chain; its full sequence is Mediator of RNA polymerase II transcription subunit 29 (188 aa).

Low complexity-rich tracts occupy residues 1-23 (MNPNMNMMPMSGPQMMQVMQSSP) and 30-43 (VQHQQQQPPQPLQQ). Residues 1–43 (MNPNMNMMPMSGPQMMQVMQSSPSGPPGPVQHQQQQPPQPLQQ) form a disordered region.

Belongs to the Mediator complex subunit 29 family. In terms of assembly, component of the Mediator complex. Self-associates. Interacts with dsx.

The protein localises to the nucleus. Component of the Mediator complex, a coactivator involved in the regulated transcription of nearly all RNA polymerase II-dependent genes. Mediator functions as a bridge to convey information from gene-specific regulatory proteins to the basal RNA polymerase II transcription machinery. Mediator is recruited to promoters by direct interactions with regulatory proteins and serves as a scaffold for the assembly of a functional preinitiation complex with RNA polymerase II and the general transcription factors. Required for female somatic sexual development. This is Mediator of RNA polymerase II transcription subunit 29 (ix) from Drosophila melanogaster (Fruit fly).